We begin with the raw amino-acid sequence, 78 residues long: Hainantoxin-XX.2 (78 aa).

The first 23 residues, 1 to 23 (MKSATLLALSYLLIALYFLICEA), serve as a signal peptide directing secretion. The propeptide occupies 24 to 47 (EHSRYEEHEILEENMGDVVNLEQR). Disulfide bonds link cysteine 49-cysteine 62, cysteine 56-cysteine 66, and cysteine 61-cysteine 77.

Belongs to the hainantoxin family. 20 subfamily. Expressed by the venom gland.

Its subcellular location is the secreted. Functionally, moderately inhibits Kv1.1/KCNA1 and Kv1.2/KCNA2 and weakly inhibits Kv1.3/KCNA3, and Kv2.1/KCNB1 voltage-gated potassium channels. The chain is Hainantoxin-XX.2 from Cyriopagopus hainanus (Chinese bird spider).